Consider the following 422-residue polypeptide: MRVIRDAVLADGRVRDIRLDGERIDAVGTALDGELFVDANADYRVLPGMIDAHVHFRQPGFEHKETWASGSRSAAAGGVTTVVDQPNTAPPTVTGDAVDEKAAHAAADSVVDWGVNGGVTGEWDPASLFDRSLFALGEVFLADSTGDMGIDAALFRDACQRAASEDVVVTVHAEDADRFDTAAKSRSDADAWSAYRTPEAEAAAVERAVEVGTEAGATIHIAHTSTPEGVDAAAAGGATCEATPHHLFLSRDDLDDLGTFGRMNPPLRSDPRREALFERLADGRIDVVATDHAPHTRAEKAADIWDAPSGVPGVETALPLLLGAAHRGELSYERVRDVTAANPADVFGLERKGHIAAGRDADLVLVDPDDAREIHGDDLHSNCEWTPFEGHVGVFPAMTLVRGTTVWDGDTVSAFDGRNVRQ.

Positions 53 and 55 each coordinate Zn(2+). Residues 55 to 57 (HFR) and Asn87 contribute to the substrate site. Zn(2+)-binding residues include Glu138, His172, His223, and Asp291. Asp291 is an active-site residue. Substrate is bound at residue His295.

This sequence belongs to the metallo-dependent hydrolases superfamily. DHOase family. Class I DHOase subfamily. Zn(2+) is required as a cofactor.

The enzyme catalyses (S)-dihydroorotate + H2O = N-carbamoyl-L-aspartate + H(+). Its pathway is pyrimidine metabolism; UMP biosynthesis via de novo pathway; (S)-dihydroorotate from bicarbonate: step 3/3. Functionally, catalyzes the reversible cyclization of carbamoyl aspartate to dihydroorotate. The protein is Dihydroorotase of Halobacterium salinarum (strain ATCC 700922 / JCM 11081 / NRC-1) (Halobacterium halobium).